The primary structure comprises 168 residues: Alpha-N-acetylgalactosamine-specific lectin (168 aa).

Positions 1–18 (MAFFRALCFVLLVGFAAA) are cleaved as a signal peptide. The C-type lectin domain maps to 38–163 (YNGNCYRYFG…CSRAFAYVCK (126 aa)). 2 cysteine pairs are disulfide-bonded: C59–C162 and C136–C154.

As to quaternary structure, monomer, homodimer and homooligomer.

In terms of biological role, alpha-N-acetylgalactosamine-specific lectin. The oligomeric form has Ca(2+)-dependent hemagglutination activity towards sheep erythrocytes. Its hemagglutination activity is inhibited by various monosaccharides, oligosaccharides and glycopeptides, including inhibition by GalNAc, blood group A trisaccharide, Tn antigen, mucin and asialomucin. The sequence is that of Alpha-N-acetylgalactosamine-specific lectin from Patiria pectinifera (Starfish).